Consider the following 245-residue polypeptide: Probable 2-phosphosulfolactate phosphatase (245 aa).

This sequence belongs to the ComB family. The cofactor is Mg(2+).

It carries out the reaction (2R)-O-phospho-3-sulfolactate + H2O = (2R)-3-sulfolactate + phosphate. In Trichormus variabilis (strain ATCC 29413 / PCC 7937) (Anabaena variabilis), this protein is Probable 2-phosphosulfolactate phosphatase.